A 175-amino-acid polypeptide reads, in one-letter code: Co-chaperone protein HscB homolog (175 aa).

The region spanning 2–76 (NYFALFNLTP…RAEHMLELRG (75 aa)) is the J domain.

Belongs to the HscB family. As to quaternary structure, interacts with HscA and stimulates its ATPase activity.

Functionally, co-chaperone involved in the maturation of iron-sulfur cluster-containing proteins. Seems to help targeting proteins to be folded toward HscA. This chain is Co-chaperone protein HscB homolog, found in Pseudoalteromonas atlantica (strain T6c / ATCC BAA-1087).